Here is a 545-residue protein sequence, read N- to C-terminus: O-phosphoserine--tRNA(Cys) ligase (545 aa).

Substrate contacts are provided by residues 189 to 191 (HMT), 234 to 236 (SAS), 276 to 277 (YY), and asparagine 328.

This sequence belongs to the class-II aminoacyl-tRNA synthetase family. O-phosphoseryl-tRNA(Cys) synthetase subfamily. In terms of assembly, homotetramer. Interacts with SepCysS.

It catalyses the reaction tRNA(Cys) + O-phospho-L-serine + ATP = O-phospho-L-seryl-tRNA(Cys) + AMP + diphosphate. Its function is as follows. Catalyzes the attachment of O-phosphoserine (Sep) to tRNA(Cys). This chain is O-phosphoserine--tRNA(Cys) ligase, found in Methanothrix thermoacetophila (strain DSM 6194 / JCM 14653 / NBRC 101360 / PT) (Methanosaeta thermophila).